Consider the following 164-residue polypeptide: DNA-directed RNA polymerase 19 kDa subunit (164 aa).

A compositionally biased stretch (acidic residues) spans 1–35 (MADTDDIIDYESDDLTEYEDDEEEEEDGESLETSD). Positions 1-39 (MADTDDIIDYESDDLTEYEDDEEEEEDGESLETSDIDPK) are disordered.

This sequence belongs to the poxviridae DNA-directed RNA polymerase 19 kDa subunit family. In terms of assembly, the DNA-dependent RNA polymerase used for intermediate and late genes expression consists of eight subunits Rpo30/OPG66, Rpo7/OPG90, Rpo22/OPG103, Rpo147/OPG105, Rpo18/OPG119, Rpo19/OPG131, Rpo132/OPG151 and Rpo35/OPG156. The same holoenzyme, with the addition of the transcription-specificity factor OPG109, is used for early gene expression.

The protein localises to the virion. The catalysed reaction is RNA(n) + a ribonucleoside 5'-triphosphate = RNA(n+1) + diphosphate. Part of the DNA-dependent RNA polymerase which catalyzes the transcription of viral DNA into RNA using the four ribonucleoside triphosphates as substrates. Responsible for the transcription of early, intermediate and late genes. DNA-dependent RNA polymerase associates with the early transcription factor (ETF), itself composed of OPG118 and OPG133, thereby allowing the early genes transcription. Late transcription, and probably also intermediate transcription, require newly synthesized RNA polymerase. This Homo sapiens (Human) protein is DNA-directed RNA polymerase 19 kDa subunit (OPG131).